A 192-amino-acid polypeptide reads, in one-letter code: dTTP/UTP pyrophosphatase (192 aa).

D72 (proton acceptor) is an active-site residue.

This sequence belongs to the Maf family. YhdE subfamily. A divalent metal cation is required as a cofactor.

It localises to the cytoplasm. The catalysed reaction is dTTP + H2O = dTMP + diphosphate + H(+). The enzyme catalyses UTP + H2O = UMP + diphosphate + H(+). Nucleoside triphosphate pyrophosphatase that hydrolyzes dTTP and UTP. May have a dual role in cell division arrest and in preventing the incorporation of modified nucleotides into cellular nucleic acids. The sequence is that of dTTP/UTP pyrophosphatase from Hydrogenovibrio crunogenus (strain DSM 25203 / XCL-2) (Thiomicrospira crunogena).